We begin with the raw amino-acid sequence, 201 residues long: IMP cyclohydrolase (201 aa).

Belongs to the archaeal IMP cyclohydrolase family.

It catalyses the reaction IMP + H2O = 5-formamido-1-(5-phospho-D-ribosyl)imidazole-4-carboxamide. Its pathway is purine metabolism; IMP biosynthesis via de novo pathway; IMP from 5-formamido-1-(5-phospho-D-ribosyl)imidazole-4-carboxamide: step 1/1. In terms of biological role, catalyzes the cyclization of 5-formylamidoimidazole-4-carboxamide ribonucleotide to IMP. This Methanococcus maripaludis (strain DSM 14266 / JCM 13030 / NBRC 101832 / S2 / LL) protein is IMP cyclohydrolase.